The following is a 179-amino-acid chain: Large ribosomal subunit protein uL6 (179 aa).

This sequence belongs to the universal ribosomal protein uL6 family. Part of the 50S ribosomal subunit.

This protein binds to the 23S rRNA, and is important in its secondary structure. It is located near the subunit interface in the base of the L7/L12 stalk, and near the tRNA binding site of the peptidyltransferase center. The chain is Large ribosomal subunit protein uL6 from Acidobacterium capsulatum (strain ATCC 51196 / DSM 11244 / BCRC 80197 / JCM 7670 / NBRC 15755 / NCIMB 13165 / 161).